Reading from the N-terminus, the 302-residue chain is Aspartate carbamoyltransferase catalytic subunit (302 aa).

Carbamoyl phosphate contacts are provided by arginine 51 and threonine 52. Position 80 (lysine 80) interacts with L-aspartate. Carbamoyl phosphate-binding residues include arginine 101, histidine 129, and glutamine 132. L-aspartate-binding residues include arginine 162 and arginine 224. Leucine 263 and proline 264 together coordinate carbamoyl phosphate.

It belongs to the aspartate/ornithine carbamoyltransferase superfamily. ATCase family. In terms of assembly, heterododecamer (2C3:3R2) of six catalytic PyrB chains organized as two trimers (C3), and six regulatory PyrI chains organized as three dimers (R2).

It catalyses the reaction carbamoyl phosphate + L-aspartate = N-carbamoyl-L-aspartate + phosphate + H(+). Its pathway is pyrimidine metabolism; UMP biosynthesis via de novo pathway; (S)-dihydroorotate from bicarbonate: step 2/3. Its function is as follows. Catalyzes the condensation of carbamoyl phosphate and aspartate to form carbamoyl aspartate and inorganic phosphate, the committed step in the de novo pyrimidine nucleotide biosynthesis pathway. The chain is Aspartate carbamoyltransferase catalytic subunit from Azobacteroides pseudotrichonymphae genomovar. CFP2.